Reading from the N-terminus, the 685-residue chain is Mannan-binding lectin serine protease 2 (685 aa).

An N-terminal signal peptide occupies residues 1-19 (MRLLIVLGLLWSLVATLLG). The 118-residue stretch at 20–137 (SKWPEPVFGR…TGFEAFYAAE (118 aa)) folds into the CUB 1 domain. Ca(2+) contacts are provided by Glu67 and Asp75. The cysteines at positions 72 and 90 are disulfide-linked. Asn103 carries an N-linked (GlcNAc...) asparagine glycan. Ca(2+) is bound by residues Asp120, Ser122, Asn123, Asp138, and Val139. The EGF-like; calcium-binding domain maps to 138 to 181 (DVDECRTSLGDSVPCDHYCHNYLGGYYCSCRVGYILHQNKHTCS). 4 disulfide bridges follow: Cys152-Cys165, Cys167-Cys180, Cys184-Cys211, and Cys241-Cys259. Asn158 carries the post-translational modification (3R)-3-hydroxyasparagine. Residues Tyr159 and Gly162 each contribute to the Ca(2+) site. The CUB 2 domain occupies 184–296 (CSGQVFTGRS…TGWKIHYTST (113 aa)). N-linked (GlcNAc...) asparagine glycosylation occurs at Asn285. Sushi domains are found at residues 298–363 (QPCP…ECSI) and 364–431 (IDCG…VCKP). 7 disulfides stabilise this stretch: Cys300-Cys348, Cys328-Cys361, Cys366-Cys411, Cys396-Cys429, Cys433-Cys551, Cys597-Cys617, and Cys628-Cys659. One can recognise a Peptidase S1 domain in the interval 444–683 (IIGGQPAKPG…YIPWIENIIN (240 aa)). Residues His482 and Asp531 each act as charge relay system in the active site. Ser632 acts as the Charge relay system in catalysis. An N-linked (GlcNAc...) asparagine glycan is attached at Asn641.

The protein belongs to the peptidase S1 family. Homodimer; disulfide-linked. Binds MBL2. Isoform 2 binds to MASP1. Binds SERPING1. Post-translationally, N-glycosylated. The iron and 2-oxoglutarate dependent 3-hydroxylation of aspartate and asparagine is (R) stereospecific within EGF domains. In terms of tissue distribution, highly expressed in liver. Secreted in plasma.

It localises to the secreted. The catalysed reaction is Selective cleavage after Arg-223 in complement component C2 (-Ser-Leu-Gly-Arg-|-Lys-Ile-Gln-Ile) and after Arg-76 in complement component C4 (-Gly-Leu-Gln-Arg-|-Ala-Leu-Glu-Ile).. In terms of biological role, serum protease that plays an important role in the activation of the complement system via mannose-binding lectin. After activation by auto-catalytic cleavage it cleaves C2 and C4, leading to their activation and to the formation of C3 convertase. This is Mannan-binding lectin serine protease 2 (Masp2) from Rattus norvegicus (Rat).